The primary structure comprises 187 residues: Flavin prenyltransferase UbiX (187 aa).

FMN contacts are provided by residues G9 to S11, S34, and R123. 2 residues coordinate dimethylallyl phosphate: Y153 and K169.

The protein belongs to the UbiX/PAD1 family.

It carries out the reaction dimethylallyl phosphate + FMNH2 = prenylated FMNH2 + phosphate. Its function is as follows. Flavin prenyltransferase that catalyzes the synthesis of the prenylated FMN cofactor (prenyl-FMN) for 4-hydroxy-3-polyprenylbenzoic acid decarboxylase UbiD. The prenyltransferase is metal-independent and links a dimethylallyl moiety from dimethylallyl monophosphate (DMAP) to the flavin N5 and C6 atoms of FMN. The polypeptide is Flavin prenyltransferase UbiX (Helicobacter pylori (strain ATCC 700392 / 26695) (Campylobacter pylori)).